The sequence spans 586 residues: ATPase family AAA domain-containing protein 3A (586 aa).

Disordered stretches follow at residues methionine 1–leucine 55 and glutamine 111–aspartate 134. An N-acetylserine modification is found at serine 2. The required for interaction with the inner surface of the mitochondrial outer membrane stretch occupies residues serine 2 to phenylalanine 50. Topologically, residues serine 2–lysine 246 are mitochondrial intermembrane. Over residues glycine 17 to glutamine 26 the composition is skewed to pro residues. Basic and acidic residues-rich tracts occupy residues glycine 32–serine 48 and glutamine 111–glutamine 125. The stretch at glutamine 86 to arginine 219 forms a coiled coil. Residues valine 247 to alanine 264 traverse the membrane as a helical segment. Over lysine 265–serine 586 the chain is Mitochondrial matrix. An S100B-binding region spans residues arginine 290 to arginine 305. At serine 321 the chain carries Phosphoserine. Glycine 352 to threonine 359 contributes to the ATP binding site. An N6-acetyllysine modification is found at lysine 491.

Belongs to the AAA ATPase family. In terms of assembly, can form homooligomers. Homodimer formation at the N-terminus may be regulated by ATP and is required for the interaction with the inner surface of the mitochondrial outer membrane and correct mitochondrial homeostasis. Interacts with components of the mitochondrial ribosome and with other proteins involved in mitochondrial RNA metabolism. May also interact with protein involved in lipid metabolism, including STARD9. May interact with FAM210A. Interacts with GADD45GIP1. Interacts with S100B in a Ca(+2)- and Zn(+2)-dependent manner; this interaction probably occurs in the cytosol prior to mitochondrial targeting. S100B could assist ATAD3A cytoplasmic processing, preventing aggregation and favoring mitochondrial localization. Interacts with HSP60/HSPD1. Forms heterooligomers with ATAD3B; this interaction may affect ATAD3A activity. Interacts with CLPB. Interacts with EIF2AK3/PERK; ATAD3A and EIF2S1/eIF-2-alpha occupy a common binding site within the cytoplasmic loop of EIF2AK3/PERK, leading to prevent EIF2AK3/PERK association with its substrate EIF2S1/eIF-2-alpha. Overexpressed in lung adenocarcinomas (at protein level).

It localises to the mitochondrion inner membrane. Its subcellular location is the mitochondrion matrix. The protein resides in the mitochondrion nucleoid. The enzyme catalyses ATP + H2O = ADP + phosphate + H(+). Its function is as follows. Essential for mitochondrial network organization, mitochondrial metabolism and cell growth at organism and cellular level. May play an important role in mitochondrial protein synthesis. May also participate in mitochondrial DNA replication. May bind to mitochondrial DNA D-loops and contribute to nucleoid stability. Required for enhanced channeling of cholesterol for hormone-dependent steroidogenesis. Involved in mitochondrial-mediated antiviral innate immunity. Required to protect mitochondria from the PERK-mediated unfolded protein response: specifically inhibits the activity of EIF2AK3/PERK at mitochondria-endoplasmic reticulum contact sites, thereby providing a safe haven for mitochondrial protein translation during endoplasmic reticulum stress. Ability to inhibit EIF2AK3/PERK is independent of its ATPase activity. Also involved in the mitochondrial DNA damage response by promoting signaling between damaged genomes and the mitochondrial membrane, leading to activation of the integrated stress response (ISR). This is ATPase family AAA domain-containing protein 3A from Homo sapiens (Human).